Here is a 259-residue protein sequence, read N- to C-terminus: Trypsin (259 aa).

A signal peptide spans Met1–Ala32. The propeptide at Ala33 to Pro36 is activation peptide. In terms of domain architecture, Peptidase S1 spans Val37–Arg257. A disulfide bridge links Cys58 with Cys74. Active-site charge relay system residues include His73 and Asp118. Intrachain disulfides connect Cys177–Cys192 and Cys204–Cys233. The Charge relay system role is filled by Ser208.

This sequence belongs to the peptidase S1 family.

It catalyses the reaction Preferential cleavage: Arg-|-Xaa, Lys-|-Xaa.. This chain is Trypsin (sprT), found in Streptomyces griseus.